The following is a 101-amino-acid chain: Small ribosomal subunit protein uS14 (101 aa).

It belongs to the universal ribosomal protein uS14 family. Part of the 30S ribosomal subunit. Contacts proteins S3 and S10.

In terms of biological role, binds 16S rRNA, required for the assembly of 30S particles and may also be responsible for determining the conformation of the 16S rRNA at the A site. This Shewanella frigidimarina (strain NCIMB 400) protein is Small ribosomal subunit protein uS14.